The chain runs to 207 residues: 3-isopropylmalate dehydratase small subunit (207 aa).

The protein belongs to the LeuD family. LeuD type 1 subfamily. In terms of assembly, heterodimer of LeuC and LeuD.

It catalyses the reaction (2R,3S)-3-isopropylmalate = (2S)-2-isopropylmalate. It participates in amino-acid biosynthesis; L-leucine biosynthesis; L-leucine from 3-methyl-2-oxobutanoate: step 2/4. Functionally, catalyzes the isomerization between 2-isopropylmalate and 3-isopropylmalate, via the formation of 2-isopropylmaleate. The polypeptide is 3-isopropylmalate dehydratase small subunit (Acidithiobacillus ferrooxidans (strain ATCC 23270 / DSM 14882 / CIP 104768 / NCIMB 8455) (Ferrobacillus ferrooxidans (strain ATCC 23270))).